Here is a 539-residue protein sequence, read N- to C-terminus: uncharacterized protein (539 aa).

2 ABC transporter domains span residues 8-265 (VRIT…SRAL) and 307-537 (IELD…IGDM). Residue 339-346 (GDNGSGKS) participates in ATP binding.

It belongs to the ABC transporter superfamily.

It localises to the mitochondrion. This is an uncharacterized protein from Saccharomyces cerevisiae (strain ATCC 204508 / S288c) (Baker's yeast).